Reading from the N-terminus, the 161-residue chain is S-ribosylhomocysteine lyase (161 aa).

Fe cation-binding residues include His-58, His-62, and Cys-128.

This sequence belongs to the LuxS family. In terms of assembly, homodimer. Requires Fe cation as cofactor.

The catalysed reaction is S-(5-deoxy-D-ribos-5-yl)-L-homocysteine = (S)-4,5-dihydroxypentane-2,3-dione + L-homocysteine. Involved in the synthesis of autoinducer 2 (AI-2) which is secreted by bacteria and is used to communicate both the cell density and the metabolic potential of the environment. The regulation of gene expression in response to changes in cell density is called quorum sensing. Catalyzes the transformation of S-ribosylhomocysteine (RHC) to homocysteine (HC) and 4,5-dihydroxy-2,3-pentadione (DPD). The polypeptide is S-ribosylhomocysteine lyase (Bifidobacterium adolescentis (strain ATCC 15703 / DSM 20083 / NCTC 11814 / E194a)).